The chain runs to 128 residues: Translation initiation factor 5A (128 aa).

Position 35 is a hypusine (Lys-35).

It belongs to the eIF-5A family.

Its subcellular location is the cytoplasm. Functions by promoting the formation of the first peptide bond. This is Translation initiation factor 5A from Methanosarcina barkeri (strain Fusaro / DSM 804).